The chain runs to 212 residues: Adenylate kinase (212 aa).

10–15 serves as a coordination point for ATP; sequence GAGKGT. The interval 30-59 is NMP; that stretch reads STGDMFRAAMANQTEMGRLAKSYIDKGELV. AMP-binding positions include threonine 31, arginine 36, 57–59, 86–89, and glutamine 93; these read ELV and GYPR. Positions 127 to 159 are LID; that stretch reads GRIINRKTGETFHKVFNPPVDYKEEDYYQREDD. Residues arginine 128 and 137-138 each bind ATP; that span reads TF. Residues arginine 156 and arginine 167 each coordinate AMP. Glutamine 195 is a binding site for ATP.

The protein belongs to the adenylate kinase family. In terms of assembly, monomer.

Its subcellular location is the cytoplasm. It catalyses the reaction AMP + ATP = 2 ADP. It participates in purine metabolism; AMP biosynthesis via salvage pathway; AMP from ADP: step 1/1. Catalyzes the reversible transfer of the terminal phosphate group between ATP and AMP. Plays an important role in cellular energy homeostasis and in adenine nucleotide metabolism. The chain is Adenylate kinase from Streptococcus pyogenes serotype M3 (strain ATCC BAA-595 / MGAS315).